A 225-amino-acid chain; its full sequence is Probable septum site-determining protein MinC (225 aa).

The disordered stretch occupies residues 87–112 (PTHMASPQGNSSKTRSSDTQPKPKTP). Residues 91-108 (ASPQGNSSKTRSSDTQPK) show a composition bias toward polar residues.

Belongs to the MinC family. In terms of assembly, interacts with MinD and FtsZ.

Functionally, cell division inhibitor that blocks the formation of polar Z ring septums. Rapidly oscillates between the poles of the cell to destabilize FtsZ filaments that have formed before they mature into polar Z rings. Prevents FtsZ polymerization. The sequence is that of Probable septum site-determining protein MinC from Prochlorococcus marinus (strain MIT 9313).